The primary structure comprises 906 residues: Coatomer subunit beta' (906 aa).

8 WD repeats span residues 13–52 (ARSD…LVKT), 55–94 (VCDL…RVHM), 97–136 (AHSD…SCSQ), 140–180 (GHTH…PNFT), 183–224 (GHEK…CVQT), 227–266 (GHAQ…LEST), 350–388 (SCEI…NKSF), and 390–425 (SAQE…KSFK). At K627 the chain carries N6-acetyllysine. The WD 9 repeat unit spans residues 746–783 (IRTGRLPEAAFLARTYLPSQVSRVVKLWRENLSKVNQK). Residues 837–872 (EEAKGFQPSRSAAQQELDGKPASPTPVIVTSQTANK) form a disordered region. Residue S859 is modified to Phosphoserine. A Phosphothreonine modification is found at T861. The stretch at 866-891 (TSQTANKEEKSLLELEVDLDNLEIED) forms a coiled coil.

Belongs to the WD repeat COPB2 family. As to quaternary structure, oligomeric complex that consists of at least the alpha, beta, beta', gamma, delta, epsilon and zeta subunits. Probably interacts with PEX11A. Interacts with SCYL1. Interacts with JAGN1.

Its subcellular location is the cytoplasm. The protein localises to the cytosol. The protein resides in the golgi apparatus membrane. It is found in the cytoplasmic vesicle. It localises to the COPI-coated vesicle membrane. In terms of biological role, the coatomer is a cytosolic protein complex that binds to dilysine motifs and reversibly associates with Golgi non-clathrin-coated vesicles, which further mediate biosynthetic protein transport from the ER, via the Golgi up to the trans Golgi network. Coatomer complex is required for budding from Golgi membranes, and is essential for the retrograde Golgi-to-ER transport of dilysine-tagged proteins. In mammals, the coatomer can only be recruited by membranes associated to ADP-ribosylation factors (ARFs), which are small GTP-binding proteins; the complex also influences the Golgi structural integrity, as well as the processing, activity, and endocytic recycling of LDL receptors. Its function is as follows. This coatomer complex protein, essential for Golgi budding and vesicular trafficking, is a selective binding protein (RACK) for protein kinase C, epsilon type. It binds to Golgi membranes in a GTP-dependent manner. This chain is Coatomer subunit beta' (COPB2), found in Bos taurus (Bovine).